A 517-amino-acid polypeptide reads, in one-letter code: Acyltransferase AFT15-1 (517 aa).

Histidine 180 acts as the Proton acceptor in catalysis.

This sequence belongs to the plant acyltransferase family.

The protein operates within mycotoxin biosynthesis. Functionally, acyltransferase; part of the gene clusters that mediate the biosynthesis of the host-selective toxins (HSTs) AF-toxins responsible for Alternaria black spot of strawberry disease by the strawberry pathotype. AF-toxin I and III are valine derivatives of 2,3-dyhydroxy-isovaleric acid and 2-hydroxy-isovaleric acid respectively, while AF II is an isoleucine derivative of 2-hydroxy-valeric acid. These derivatives are bound to a 9,10-epoxy-8-hydroxy-9-methyl-decatrienoic acid (EDA) moiety. On cellular level, AF-toxins affect plasma membrane of susceptible cells and cause a sudden increase in loss of K(+) after a few minutes of toxin treatment. The aldo-keto reductase AFTS1 catalyzes the conversion of 2-keto-isovaleric acid (2-KIV) to 2-hydroxy-isovaleric acid (2-HIV) by reduction of its ketone to an alcohol. The acyl-CoA ligase AFT1, the hydrolase AFT2 and the enoyl-CoA hydratases AFT3 and AFT6, but also the polyketide synthase AFT9, the acyl-CoA dehydrogenase AFT10, the cytochrome P450 monooxygenase AFT11 and the oxidoreductase AFT12 are all involved in the biosynthesis of the AK-, AF- and ACT-toxin common EDA structural moiety. The exact function of each enzyme, and of additional enzymes identified within the AF-toxin clusters have still to be determined. This is Acyltransferase AFT15-1 (AFT15-1) from Alternaria alternata (Alternaria rot fungus).